Reading from the N-terminus, the 552-residue chain is Putative E3 ubiquitin-protein ligase ARI6 (552 aa).

A TRIAD supradomain region spans residues 129 to 343; that stretch reads REFTCGICFE…GGYYACNRYE (215 aa). Zn(2+) is bound by residues Cys-133, Cys-136, Cys-150, His-152, Cys-155, Cys-158, Cys-178, Cys-183, Cys-222, Cys-227, Cys-245, Cys-247, Cys-252, Cys-255, His-260, Cys-265, Cys-292, and Cys-295. Residues 133 to 183 form an RING-type 1 zinc finger; that stretch reads CGICFESYPLEETISVSCGHPFCATCWTGYISTSINDGPGCLMLKCPYPCC. The segment at 202–265 adopts an IBR-type zinc-finger fold; the sequence is ERYYRYFLRS…SEEAHRPVDC (64 aa). The RING-type 2; atypical zinc-finger motif lies at 292–322; that stretch reads CPKCKRPIEKNHGCMHMTCTPPCKFEFCWLC. Cys-305 is an active-site residue. Residues Cys-310, Cys-314, Cys-319, Cys-322, His-329, and Cys-339 each contribute to the Zn(2+) site. The tract at residues 518 to 552 is disordered; the sequence is HAASSKPANCKPSSNTKDGGKGKKEALTMAGSAET. Over residues 519 to 534 the composition is skewed to polar residues; it reads AASSKPANCKPSSNTK.

This sequence belongs to the RBR family. Ariadne subfamily. Requires Zn(2+) as cofactor.

The catalysed reaction is [E2 ubiquitin-conjugating enzyme]-S-ubiquitinyl-L-cysteine + [acceptor protein]-L-lysine = [E2 ubiquitin-conjugating enzyme]-L-cysteine + [acceptor protein]-N(6)-ubiquitinyl-L-lysine.. The protein operates within protein modification; protein ubiquitination. In terms of biological role, might act as an E3 ubiquitin-protein ligase, or as part of E3 complex, which accepts ubiquitin from specific E2 ubiquitin-conjugating enzymes and then transfers it to substrates. In Arabidopsis thaliana (Mouse-ear cress), this protein is Putative E3 ubiquitin-protein ligase ARI6 (ARI6).